A 918-amino-acid polypeptide reads, in one-letter code: Importin subunit beta-2 (918 aa).

18 HEAT repeats span residues 11–38 (YVLQ…EAME), 43–92 (QPEF…GGNN), 103–137 (YVKS…TYYR), 145–181 (GLQM…FQLE), 190–222 (EALL…TVIP), 235–263 (FLEI…SFLL), 275–303 (DGIV…FLHA), 320–413 (KDIV…MTNI), 421–449 (IAFP…GAMA), 461–488 (PALI…TLSR), 501–534 (LIPV…IENA), 542–577 (LFYS…AEKC), 583–620 (AMQI…SSLG), 628–678 (PEVY…GLGA), 694–725 (ILKI…YFFN), 777–814 (IDMS…LTHP), 825–858 (DSNW…INLT), and 867–900 (DTIH…SAQI). Residues 361–395 (APRIVKKKEAGNGEDADDNEDDDDDDDDEDGDVDT) form a disordered region. Acidic residues predominate over residues 372–393 (NGEDADDNEDDDDDDDDEDGDV).

It belongs to the importin beta family. Importin beta-2 subfamily. In terms of assembly, interacts with Ran (GSP1); interacts specifically with the GTP-bound form of Ran (GTP-Ran), protecting it from GTP hydrolysis and nucleotide exchange. Interacts with nucleoporins NUP1, NUP100 and NUP116. Interacts with NAB2 and HRP1/NAB4; via their rg-NLS. Interacts with TFG2; via its PY-NLS.

The protein resides in the cytoplasm. The protein localises to the nucleus. It is found in the nuclear pore complex. In terms of biological role, functions in nuclear protein import as nuclear transport receptor. Serves as receptor for arginine/glycine-rich nuclear localization signals (rg-NLS) and PY-NLS in cargo substrates. Its predominant cargo substrate seems to be mRNA-binding proteins. Required for nuclear transport of NAB2, HRP1/NAB4 and TFG2. Mediates docking of the importin/substrate complex to the nuclear pore complex (NPC) through binding to repeat-containing nucleoporins. The complex is subsequently translocated through the pore by an energy requiring, Ran-dependent mechanism. At the nucleoplasmic side of the NPC, GTP-Ran binding leads to release of the cargo. Efficient GTP-Ran-mediated substrate release requires RNA. The importin is re-exported from the nucleus to the cytoplasm where GTP hydrolysis releases Ran from importin. The directionality of nuclear import is thought to be conferred by an asymmetric distribution of the GTP- and GDP-bound forms of Ran between the cytoplasm and nucleus. This is Importin subunit beta-2 from Saccharomyces cerevisiae (strain ATCC 204508 / S288c) (Baker's yeast).